The sequence spans 274 residues: 2,3,4,5-tetrahydropyridine-2,6-dicarboxylate N-succinyltransferase (274 aa).

Residues R104 and D141 each coordinate substrate.

The protein belongs to the transferase hexapeptide repeat family. As to quaternary structure, homotrimer.

It localises to the cytoplasm. The catalysed reaction is (S)-2,3,4,5-tetrahydrodipicolinate + succinyl-CoA + H2O = (S)-2-succinylamino-6-oxoheptanedioate + CoA. The protein operates within amino-acid biosynthesis; L-lysine biosynthesis via DAP pathway; LL-2,6-diaminopimelate from (S)-tetrahydrodipicolinate (succinylase route): step 1/3. The protein is 2,3,4,5-tetrahydropyridine-2,6-dicarboxylate N-succinyltransferase of Buchnera aphidicola subsp. Acyrthosiphon pisum (strain APS) (Acyrthosiphon pisum symbiotic bacterium).